A 59-amino-acid polypeptide reads, in one-letter code: Large ribosomal subunit protein uL30 (59 aa).

It belongs to the universal ribosomal protein uL30 family. In terms of assembly, part of the 50S ribosomal subunit.

This chain is Large ribosomal subunit protein uL30, found in Brachyspira hyodysenteriae (strain ATCC 49526 / WA1).